A 135-amino-acid polypeptide reads, in one-letter code: Salivary protein 15 Iper-1 (135 aa).

The N-terminal stretch at 1 to 22 is a signal peptide; it reads MESFVAMKVVCILFLFVVAAEA. N-linked (GlcNAc...) asparagine glycans are attached at residues Asn93 and Asn104. Residues 116–135 are CD4-binding; that stretch reads GPNKQTCADKSKCVGHIPGC.

It belongs to the salp15 family. In terms of assembly, interacts with host CD4. Interacts with host DC-SIGN (CD209). As to quaternary structure, (Microbial infection) Interacts with Borrelia outer surface protein C (OspC). In terms of tissue distribution, expressed in salivary glands from feeding female ticks. Highly expressed 4 days after start of feeding.

The protein resides in the secreted. In terms of biological role, salivary tick protein that downregulates host immune system by binding to both dendritic cells, and CD4(+) T cells. Specifically binds to the CD4 coreceptor on T cells. This interaction prevents the activation of the Src kinase, Lck, and its downstream substrate Zap-70, and results in deficient activation of PLCgamma1, the repression of calcium fluxes triggered by T-cell antigen receptor (TCR) ligation, and a subsequent reduction in interleukin-2 production. This salivary protein also binds to DC-SIGN (CD209) on dendritic cells (DC) and activates the Raf-1 kinase/MEK signaling pathway that results in down-regulating expression of pro-inflammatory cytokines. Furthermore, it inhibits T cell proliferation induced by DCs. It also inhibits in vitro keratinocyte inflammation induced by Borrelia burgdorferi or by the major outer surface protein (OspC) of Borrelia. In addition, it downregulates chemokines and monocyte chemoattractant protein 1, as well as several antimicrobial peptides such as defensins, cathelicidin, psoriasin, and RNase 7. Apart from its immunomodulatory activities, it is also associated with protection of Borrelia spirochetes from antibody-mediated killing through its binding to OspC. In vivo, tests on different immune disease animal models show promising therapeutic results, e.g., in inhibiting HIV infection, experimental autoimmune encephalomyelitis, transplantation rejection, and asthma. (Microbial infection) Protects Borrelia garinii from anti-Borrelia antibody-mediated cytotoxicity in vitro. May facilitate B.garinii transmission in mouse model. Functionally, (Microbial infection) Protects Borrelia burgdorferi from anti-Borrelia antibody-mediated cytotoxicity in vitro. Its function is as follows. (Microbial infection) Protects Borrelia afzelii from anti-Borrelia antibody-mediated cytotoxicity in vitro. In Ixodes persulcatus (Taiga tick), this protein is Salivary protein 15 Iper-1.